The chain runs to 212 residues: Probable GTP-binding protein EngB (212 aa).

An EngB-type G domain is found at 38 to 210 (SLPEIAFVGK…KASLAKCIKP (173 aa)). GTP is bound by residues 46 to 53 (GKSNVGKS), 73 to 77 (GRTRQ), 91 to 94 (DLPG), 158 to 161 (TKSD), and 189 to 191 (VSN). 2 residues coordinate Mg(2+): serine 53 and threonine 75.

Belongs to the TRAFAC class TrmE-Era-EngA-EngB-Septin-like GTPase superfamily. EngB GTPase family. Mg(2+) is required as a cofactor.

Functionally, necessary for normal cell division and for the maintenance of normal septation. This chain is Probable GTP-binding protein EngB, found in Rickettsia peacockii (strain Rustic).